Consider the following 67-residue polypeptide: Conotoxin Cal12.1p2 (67 aa).

Residues 1-21 (DLITNSYTRGKPRHVTSWRNL) constitute a propeptide that is removed on maturation.

Contains 4 disulfide bonds. As to expression, expressed by the venom duct.

The protein localises to the secreted. The chain is Conotoxin Cal12.1p2 from Californiconus californicus (California cone).